We begin with the raw amino-acid sequence, 107 residues long: Flagellar transcriptional regulator FlhD (107 aa).

Belongs to the FlhD family. In terms of assembly, homodimer; disulfide-linked. Forms a heterohexamer composed of two FlhC and four FlhD subunits. Each FlhC binds a FlhD dimer, forming a heterotrimer, and a hexamer assembles by dimerization of two heterotrimers.

It is found in the cytoplasm. Functions in complex with FlhC as a master transcriptional regulator that regulates transcription of several flagellar and non-flagellar operons by binding to their promoter region. Activates expression of class 2 flagellar genes, including fliA, which is a flagellum-specific sigma factor that turns on the class 3 genes. Also regulates genes whose products function in a variety of physiological pathways. This is Flagellar transcriptional regulator FlhD from Bordetella avium (strain 197N).